Reading from the N-terminus, the 270-residue chain is ATP synthase subunit a (270 aa).

Helical transmembrane passes span 40–60 (IDSLFFSWFTGLIFLGIFYAV), 98–118 (IAPLALTIFCWVFLMNLMDLV), 143–163 (DVNITMAMALGVFALMIYYSI), 208–228 (LFGNMFAGEVVFILCAAMLPW), and 239–259 (AIFHILVILIQAFVFMMLTIV).

This sequence belongs to the ATPase A chain family. In terms of assembly, F-type ATPases have 2 components, CF(1) - the catalytic core - and CF(0) - the membrane proton channel. CF(1) has five subunits: alpha(3), beta(3), gamma(1), delta(1), epsilon(1). CF(0) has three main subunits: a(1), b(2) and c(9-12). The alpha and beta chains form an alternating ring which encloses part of the gamma chain. CF(1) is attached to CF(0) by a central stalk formed by the gamma and epsilon chains, while a peripheral stalk is formed by the delta and b chains.

The protein localises to the cell inner membrane. Its function is as follows. Key component of the proton channel; it plays a direct role in the translocation of protons across the membrane. This Vibrio vulnificus (strain CMCP6) protein is ATP synthase subunit a.